A 572-amino-acid chain; its full sequence is Proline--tRNA ligase (572 aa).

Belongs to the class-II aminoacyl-tRNA synthetase family. ProS type 1 subfamily. As to quaternary structure, homodimer.

It is found in the cytoplasm. It catalyses the reaction tRNA(Pro) + L-proline + ATP = L-prolyl-tRNA(Pro) + AMP + diphosphate. In terms of biological role, catalyzes the attachment of proline to tRNA(Pro) in a two-step reaction: proline is first activated by ATP to form Pro-AMP and then transferred to the acceptor end of tRNA(Pro). As ProRS can inadvertently accommodate and process non-cognate amino acids such as alanine and cysteine, to avoid such errors it has two additional distinct editing activities against alanine. One activity is designated as 'pretransfer' editing and involves the tRNA(Pro)-independent hydrolysis of activated Ala-AMP. The other activity is designated 'posttransfer' editing and involves deacylation of mischarged Ala-tRNA(Pro). The misacylated Cys-tRNA(Pro) is not edited by ProRS. This chain is Proline--tRNA ligase, found in Caldicellulosiruptor bescii (strain ATCC BAA-1888 / DSM 6725 / KCTC 15123 / Z-1320) (Anaerocellum thermophilum).